The primary structure comprises 616 residues: Secretogranin-2 (616 aa).

An N-terminal signal peptide occupies residues 1-27 (MAEAKTHWLGASLSLILLIFLLATAEA). A propeptide spanning residues 28–30 (ASF) is cleaved from the precursor. 2 disordered regions span residues 68–104 (QAHK…RDSL) and 120–146 (AENE…PMDM). Residues 92 to 104 (ENSDLPESSRDSL) are compositionally biased toward basic and acidic residues. Residues 122 to 140 (NEPQSSLKENKPYTLNSEK) are compositionally biased toward polar residues. Y150 is subject to Sulfotyrosine. Phosphoserine occurs at positions 173, 267, 431, 531, 554, and 555. The segment covering 255 to 283 (KIESQTQEEVRDSKENIEKNEQINDEMKR) has biased composition (basic and acidic residues). Residues 255–290 (KIESQTQEEVRDSKENIEKNEQINDEMKRSGQMGLQ) are disordered. The segment covering 548-560 (ERLNQHSSQETDK) has biased composition (basic and acidic residues). Positions 548–582 (ERLNQHSSQETDKLALVSKRLPVATPKSDDAPNRQ) are disordered.

Belongs to the chromogranin/secretogranin protein family. As to quaternary structure, interacts with Secretogranin III/SCG3.

It is found in the secreted. Neuroendocrine protein of the granin family that regulates the biogenesis of secretory granules. The polypeptide is Secretogranin-2 (SCG2) (Sus scrofa (Pig)).